The primary structure comprises 317 residues: Protein phosphatase PTC7 homolog fig (317 aa).

The PPM-type phosphatase domain occupies 46–312 (PYLVTVVQGR…DDITLILASV (267 aa)). Positions 90, 91, and 235 each coordinate Mn(2+).

Belongs to the PP2C family. It depends on Mg(2+) as a cofactor. Mn(2+) is required as a cofactor.

It catalyses the reaction O-phospho-L-seryl-[protein] + H2O = L-seryl-[protein] + phosphate. The enzyme catalyses O-phospho-L-threonyl-[protein] + H2O = L-threonyl-[protein] + phosphate. The sequence is that of Protein phosphatase PTC7 homolog fig from Drosophila erecta (Fruit fly).